The sequence spans 128 residues: Translation initiation factor 5A (128 aa).

K35 carries the post-translational modification Hypusine.

This sequence belongs to the eIF-5A family.

The protein resides in the cytoplasm. In terms of biological role, functions by promoting the formation of the first peptide bond. This Archaeoglobus fulgidus (strain ATCC 49558 / DSM 4304 / JCM 9628 / NBRC 100126 / VC-16) protein is Translation initiation factor 5A (eif5a).